A 487-amino-acid polypeptide reads, in one-letter code: MSLPPIRLPSPYGSDRLVQLAARLRPALCDTLITVGGQEFPAHSLVLAGVSQQLGRRGQWALGEGISPSTFAQLLNFVYGESVELQPRELRPLQEAARALGVQSLEEACWRARGDRAKKPDPGLKKHQEEPEKPSRNAERELGDPGEKQKPEQVSRTGGREQEMLHKHSPPRGSPEMAGATQEAQQEQTRSKEKHLQAPVGQRGADGKHGVLMWLRENPGGSEESLHKLPGPLPPAGSLQTSVTPRPSWAEAPWLVGGQPALWSILLMPPRYGIPFYHSTPTTGAWQEVWREHRIPLSLNAPKGLWSQNQLASSSPTPGSLPQGPAQLSPGEMEESDQGHTGALATCAGHEDKAGCPPRPHPPPAPPARSRPYACSVCGKRFSLKHQMETHYRVHTGEKPFSCSLCPQRSRDFSAMTKHLRTHGAAPYRXXLCGAGCPSLASMQAHMRGHSPSQLPPGWTIRSTFLYSSSRPSRPSTSPCCPSSSTT.

Positions 29–87 (CDTLITVGGQEFPAHSLVLAGVSQQLGRRGQWALGEGISPSTFAQLLNFVYGESVELQP) constitute a BTB domain. Over residues 113 to 166 (RGDRAKKPDPGLKKHQEEPEKPSRNAERELGDPGEKQKPEQVSRTGGREQEMLH) the composition is skewed to basic and acidic residues. 2 disordered regions span residues 113 to 208 (RGDR…ADGK) and 308 to 371 (QNQL…ARSR). A compositionally biased stretch (polar residues) spans 308-320 (QNQLASSSPTPGS). The span at 357–369 (PPRPHPPPAPPAR) shows a compositional bias: pro residues. 3 consecutive C2H2-type zinc fingers follow at residues 373–395 (YACS…YRVH), 401–423 (FSCS…LRTH), and 428–450 (YRXX…MRGH). The interval 468–487 (SSSRPSRPSTSPCCPSSSTT) is disordered.

The protein belongs to the krueppel C2H2-type zinc-finger protein family. In terms of assembly, homodimer (via PTB domain). Interacts with the N-terminal of FANCC. Interacts with ZBTB16. Interacts with GATA3.

It is found in the nucleus. Functionally, DNA-binding protein that binds to the to a 5'-TGTACAGTGT-3' core sequence. May function as a transcriptional transactivator and transcriptional repressor. Probably exerts its repressor effect by preventing GATA3 from binding to DNA. May play a role in regulating the differentiation and activation of helper T-cells. The sequence is that of Zinc finger and BTB domain-containing protein 32 (ZBTB32) from Pan troglodytes (Chimpanzee).